A 1392-amino-acid polypeptide reads, in one-letter code: Leucine-rich PPR motif-containing protein, mitochondrial (1392 aa).

Residues Met-1–Arg-77 constitute a mitochondrion transit peptide. 14 PPR repeats span residues Leu-125–Tyr-159, Asp-160–Pro-194, Asn-195–Ile-229, Thr-230–Pro-264, Gly-265–Phe-299, Met-300–Ile-334, His-402–Ile-436, Arg-437–Pro-471, Val-677–Met-708, Val-709–Leu-745, Asp-746–Ala-783, Ala-784–Ser-820, Ser-821–Arg-856, and Arg-953–Pro-987. 2 positions are modified to N6-acetyllysine: Lys-151 and Lys-186. Residue Lys-291 is modified to N6-acetyllysine. Lys-462 is subject to N6-acetyllysine. Lys-749 is subject to N6-acetyllysine. Residues Ser-1025, Ser-1026, and Ser-1028 each carry the phosphoserine modification. PPR repeat units lie at residues Gly-1030–Phe-1064, Ser-1065–Leu-1101, Asn-1102–Pro-1136, Ser-1137–Ser-1173, Arg-1174–Thr-1208, and Asn-1315–Leu-1349. Ser-1137 is subject to Phosphoserine.

Component of mRNP complexes associated with HNRPA1. Component of the complex, at least composed of LRPPRC, BECN1 and BCL2; the interactions prevent BECN1 from forming an autophagy-inducing complex with PIK3C3. Interacts with CECR2, HEBP2, MAP1S, UXT, PPARGC1A and FOXO1. Interacts (via N-terminus) with EIF4E; the interaction promotes association of EIF4E with 4ESE-containing mRNAs. Interacts with exportin XPO1/CRM1; interacts both alone and in complex with EIF4E and 4ESE-containing mRNAs to form an EIF4E-dependent mRNA export complex. Interacts with importin IPO8; the interaction occurs when LRPPRC is in its RNA-free form and returns LRPPRC to the nucleus for further export rounds. Interacts with BECN1. As to expression, widely expressed. Expressed in liver, brain and a subset of small diameter sensory neurons in the dorsal root ganglion (at protein level).

It is found in the mitochondrion. Its subcellular location is the nucleus. It localises to the nucleoplasm. The protein resides in the nucleus inner membrane. The protein localises to the nucleus outer membrane. May play a role in RNA metabolism in both nuclei and mitochondria. In the nucleus binds to HNRPA1-associated poly(A) mRNAs and is part of nmRNP complexes at late stages of mRNA maturation which are possibly associated with nuclear mRNA export. Positively modulates nuclear export of mRNAs containing the EIF4E sensitivity element (4ESE) by binding simultaneously to both EIF4E and the 4ESE and acting as a platform for assembly for the RNA export complex. Also binds to exportin XPO1/CRM1 to engage the nuclear pore and traffic the bound mRNAs to the cytoplasm. May bind mature mRNA in the nucleus outer membrane. In mitochondria binds to poly(A) mRNA. Plays a role in translation or stability of mitochondrially encoded cytochrome c oxidase (COX) subunits. May be involved in transcription regulation. Cooperates with PPARGC1A to regulate certain mitochondrially encoded genes and gluconeogenic genes and may regulate docking of PPARGC1A to transcription factors. Seems to be involved in the transcription regulation of the multidrug-related genes MDR1 and MVP. Part of a nuclear factor that binds to the invMED1 element of MDR1 and MVP gene promoters. Binds single-stranded DNA. Required for maintaining mitochondrial potential. Suppresses the initiation of basal levels of autophagy and mitophagy by sustaining BCL2 levels. In Rattus norvegicus (Rat), this protein is Leucine-rich PPR motif-containing protein, mitochondrial (Lrpprc).